A 76-amino-acid polypeptide reads, in one-letter code: Translational regulator CsrA (76 aa).

This sequence belongs to the CsrA/RsmA family. Homodimer; the beta-strands of each monomer intercalate to form a hydrophobic core, while the alpha-helices form wings that extend away from the core.

It is found in the cytoplasm. A translational regulator that binds mRNA to regulate translation initiation and/or mRNA stability. Usually binds in the 5'-UTR at or near the Shine-Dalgarno sequence preventing ribosome-binding, thus repressing translation. Its main target seems to be the major flagellin gene, while its function is anatagonized by FliW. The protein is Translational regulator CsrA of Syntrophomonas wolfei subsp. wolfei (strain DSM 2245B / Goettingen).